A 181-amino-acid polypeptide reads, in one-letter code: ADP-ribosylation factor 1-like 2 (181 aa).

Gly-2 carries N-myristoyl glycine lipidation. Positions 3–16 (NVFGSLFKGLFGKK) are important for the stable binding to the membranes. GTP is bound by residues 24-32 (GLDAAGKTT), 126-129 (NKQD), and Ala-160.

The protein belongs to the small GTPase superfamily. Arf family.

It localises to the golgi apparatus membrane. It catalyses the reaction GTP + H2O = GDP + phosphate + H(+). With respect to regulation, alternates between an inactive GDP-bound form and an active GTP-bound form. Activated by a guanine nucleotide-exchange factor (GEF) and inactivated by GTPase-activating protein (GAP). Functionally, small GTPase involved in protein trafficking between different compartments. Modulates vesicle budding and uncoating within the Golgi complex. In its GTP-bound form, triggers the recruitment of coatomer proteins to the Golgi membrane. The hydrolysis of ARF1-bound GTP, which is mediated by ARFGAPs proteins, is required for dissociation of coat proteins from Golgi membranes and vesicles. Involved in endoplasmic reticulum dynamics during embryogenesis. Also required for adult germline function. Plays a role in cell shedding during embryogenesis probably by promoting the endocytosis of cell adhesion molecules. During neurogenesis, involved in cell autonomous Q.p neuroblast asymmetric divisions that generate one precursor cell and one apoptotic cell, probably by controlling endocytosis. Plays a role in maintaining mitochondrial morphology. The chain is ADP-ribosylation factor 1-like 2 (arf-1.2) from Caenorhabditis briggsae.